The primary structure comprises 474 residues: Neuronal acetylcholine receptor subunit eat-2 (474 aa).

The first 21 residues, 1–21, serve as a signal peptide directing secretion; the sequence is MTLKIAFFTLILLVSIERVYS. Topologically, residues 22-237 are extracellular; it reads SDEEYRLLKD…MHLKRRTMYY (216 aa). The N-linked (GlcNAc...) asparagine glycan is linked to N95. C149 and C163 are disulfide-bonded. The next 3 membrane-spanning stretches (helical) occupy residues 238–258, 266–286, and 303–323; these read GLNWIVPSILISLSNILGFTM, ITLQITNFLSVMVFLAMVSEV, and LSIVILGLSICASLIIVNIFF. Residues 324–440 lie on the Cytoplasmic side of the membrane; sequence RHPKTHRMGD…WRFMAMVIDR (117 aa). Residues 359–378 form a disordered region; it reads PRREEEKNDEEAGGDGTKLL. The chain crosses the membrane as a helical span at residues 441–461; sequence LSLFLFTGLIFGTTALIFAFC.

Belongs to the ligand-gated ion channel (TC 1.A.9) family. Acetylcholine receptor (TC 1.A.9.1) subfamily. In terms of assembly, neuronal AChR seems to be composed of two different type of subunits: alpha and beta. In terms of tissue distribution, expressed in pharyngeal muscle.

The protein resides in the postsynaptic cell membrane. Its subcellular location is the cell membrane. Its function is as follows. After binding acetylcholine, the AChR responds by an extensive change in conformation that affects all subunits and leads to opening of an ion-conducting channel across the plasma membrane. Nicotinic acetylcholine receptor in the MC pharyngeal motor neuron involved in pharyngeal pumping. Has a role in the determination of life span possibly via calorific restriction which affects growth rate, although this is independent of metabolic activity. Plays a role in the defense against the accumulation of ingested live pathogenic bacteria in the intestine. This Caenorhabditis elegans protein is Neuronal acetylcholine receptor subunit eat-2.